The sequence spans 84 residues: Keratin-associated protein 19-4 (84 aa).

Belongs to the KRTAP type 19 family. As to quaternary structure, interacts with hair keratins.

In the hair cortex, hair keratin intermediate filaments are embedded in an interfilamentous matrix, consisting of hair keratin-associated proteins (KRTAP), which are essential for the formation of a rigid and resistant hair shaft through their extensive disulfide bond cross-linking with abundant cysteine residues of hair keratins. The matrix proteins include the high-sulfur and high-glycine-tyrosine keratins. The chain is Keratin-associated protein 19-4 (KRTAP19-4) from Homo sapiens (Human).